Consider the following 268-residue polypeptide: Tryptophan synthase alpha chain (268 aa).

Active-site proton acceptor residues include Glu-49 and Asp-60.

Belongs to the TrpA family. Tetramer of two alpha and two beta chains.

The catalysed reaction is (1S,2R)-1-C-(indol-3-yl)glycerol 3-phosphate + L-serine = D-glyceraldehyde 3-phosphate + L-tryptophan + H2O. The protein operates within amino-acid biosynthesis; L-tryptophan biosynthesis; L-tryptophan from chorismate: step 5/5. Its function is as follows. The alpha subunit is responsible for the aldol cleavage of indoleglycerol phosphate to indole and glyceraldehyde 3-phosphate. The sequence is that of Tryptophan synthase alpha chain from Escherichia coli O7:K1 (strain IAI39 / ExPEC).